The following is a 201-amino-acid chain: Reticulon-like protein B10 (201 aa).

In terms of domain architecture, Reticulon spans 14-201 (VADLIMWKNR…KPTNKIKKMQ (188 aa)). A run of 3 helical transmembrane segments spans residues 25–45 (GGFL…KCGY), 46–66 (SFFP…FLWA), and 135–155 (FLNF…IPFL).

It is found in the endoplasmic reticulum membrane. The sequence is that of Reticulon-like protein B10 (RTNLB10) from Arabidopsis thaliana (Mouse-ear cress).